Reading from the N-terminus, the 298-residue chain is Glutamyl-Q tRNA(Asp) synthetase (298 aa).

Residues 8–12 (RFAPS) and glutamate 44 contribute to the L-glutamate site. The 'HIGH' region signature appears at 11–21 (PSPTGPLHFGS). 4 residues coordinate Zn(2+): cysteine 100, cysteine 102, tyrosine 123, and cysteine 127. Positions 183 and 201 each coordinate L-glutamate. A 'KMSKS' region motif is present at residues 239 to 243 (KLSKQ). Lysine 242 contributes to the ATP binding site.

It belongs to the class-I aminoacyl-tRNA synthetase family. GluQ subfamily. Zn(2+) is required as a cofactor.

Functionally, catalyzes the tRNA-independent activation of glutamate in presence of ATP and the subsequent transfer of glutamate onto a tRNA(Asp). Glutamate is transferred on the 2-amino-5-(4,5-dihydroxy-2-cyclopenten-1-yl) moiety of the queuosine in the wobble position of the QUC anticodon. The chain is Glutamyl-Q tRNA(Asp) synthetase from Burkholderia orbicola (strain MC0-3).